We begin with the raw amino-acid sequence, 231 residues long: NADH-ubiquinone oxidoreductase chain 4 (231 aa).

Transmembrane regions (helical) follow at residues 1 to 21 (PIAGSMVLAAILLKLGGYGMI), 34 to 54 (MFIPFITLSLWGAVLANLTCL), 62 to 82 (LIAYSSISHMGLVVAAISIQT), 86 to 106 (LSGAMALMIAHGFTSSALFCL), 118 to 138 (ILILTRGFHNILPMTTTWWLL), 169 to 189 (TIILLSLSILITSIYSLHIFL), and 211 to 231 (LLMTLHIIPLILLSMKPELVM).

Belongs to the complex I subunit 4 family.

It is found in the mitochondrion membrane. It catalyses the reaction a ubiquinone + NADH + 5 H(+)(in) = a ubiquinol + NAD(+) + 4 H(+)(out). In terms of biological role, core subunit of the mitochondrial membrane respiratory chain NADH dehydrogenase (Complex I) that is believed to belong to the minimal assembly required for catalysis. Complex I functions in the transfer of electrons from NADH to the respiratory chain. The immediate electron acceptor for the enzyme is believed to be ubiquinone. The chain is NADH-ubiquinone oxidoreductase chain 4 (MT-ND4) from Causus rhombeatus (Rhombic night adder).